Consider the following 303-residue polypeptide: MEHIFLELRSPGPDLFQLGPFSLRWYGLLIAISVLVGLNLSSELASKKGLKKSLINDLLPILVLASVIGARIYYVAFEWRNYTGKNFWSSINFLNLNIPLPSALEIWGGGIAIHGALIMGTLSIIFFCRWRKEPFWDVIDVLVPSVALGQAIGRWGNFFNNEAFGIPTNLPWKLFIPYRFRPEIFSTQDYFHPTFLYESVWNIFVFGILIFLFRKSNKKELKLPPGSLSCLYLITYSLGRFWIEGLRTDPLCLGGVPPFCEGGLRIAQLISLFLISAGLLGIWRIYVSKKALPDPSSINGRNQ.

4 helical membrane passes run 18–38 (LGPFSLRWYGLLIAISVLVGL), 58–78 (LLPILVLASVIGARIYYVAFE), 106–126 (IWGGGIAIHGALIMGTLSIIF), and 133–153 (EPFWDVIDVLVPSVALGQAIG). R154 serves as a coordination point for a 1,2-diacyl-sn-glycero-3-phospho-(1'-sn-glycerol). The next 3 membrane-spanning stretches (helical) occupy residues 193-213 (PTFLYESVWNIFVFGILIFLF), 223-243 (LPPGSLSCLYLITYSLGRFWI), and 266-286 (IAQLISLFLISAGLLGIWRIY).

Belongs to the Lgt family.

It localises to the cell inner membrane. It carries out the reaction L-cysteinyl-[prolipoprotein] + a 1,2-diacyl-sn-glycero-3-phospho-(1'-sn-glycerol) = an S-1,2-diacyl-sn-glyceryl-L-cysteinyl-[prolipoprotein] + sn-glycerol 1-phosphate + H(+). It functions in the pathway protein modification; lipoprotein biosynthesis (diacylglyceryl transfer). Its function is as follows. Catalyzes the transfer of the diacylglyceryl group from phosphatidylglycerol to the sulfhydryl group of the N-terminal cysteine of a prolipoprotein, the first step in the formation of mature lipoproteins. This is Phosphatidylglycerol--prolipoprotein diacylglyceryl transferase from Prochlorococcus marinus (strain NATL1A).